A 149-amino-acid chain; its full sequence is YGYDKYGYDKYGYDKYGYDKYGYDKYGYEKGYDKYGYDKYGYEKYGYDKYGNEKYGYDKYGDDKHGHGKDYEKYGYTKEYSKNYKDYYKKYDKYDYGSRYEKYSYRKDHDKHDHDEHDHHDDHHDHRHHHHEHDHHHHHEHDHKNGKGY.

Repeat copies occupy residues Tyr-1 to Lys-5, Tyr-6 to Lys-10, Tyr-11 to Lys-15, Tyr-16 to Lys-20, Tyr-21 to Lys-25, and Tyr-26 to Lys-30. The segment at Tyr-1–Lys-64 is 13 X 5 AA approximate tandem repeats of Y-G-Y-[DE]-K. The stretch at Gly-31 to Lys-34 is one 7; truncated repeat. Repeat copies occupy residues Tyr-35–Lys-39, Tyr-40–Lys-44, and Tyr-45–Lys-49. One copy of the 11; approximate repeat lies at Tyr-50–Lys-54. Repeat 12 spans residues Tyr-55–Lys-59. Residues Tyr-60–Lys-64 form a 13; approximate repeat. Residues Tyr-105–His-124 are compositionally biased toward basic and acidic residues. The segment at Tyr-105–Tyr-149 is disordered. Residues Asp-125–His-141 show a composition bias toward basic residues.

This chain is Putative eggshell protein, found in Schistosoma mansoni (Blood fluke).